Consider the following 395-residue polypeptide: L-lactate dehydrogenase (395 aa).

One can recognise an FMN hydroxy acid dehydrogenase domain in the interval 1-380 (MIISAASDYR…SKDSLVQELS (380 aa)). Y24 contacts substrate. The FMN site is built by S106 and Q127. Residue Y129 coordinates substrate. T155 lines the FMN pocket. Residue R164 participates in substrate binding. K251 serves as a coordination point for FMN. H275 serves as the catalytic Proton acceptor. Residue R278 coordinates substrate. 306 to 330 (DSGIRNGLDVVRMIALGADSVLLGR) contacts FMN.

This sequence belongs to the FMN-dependent alpha-hydroxy acid dehydrogenase family. The cofactor is FMN.

The protein localises to the cell inner membrane. It carries out the reaction (S)-lactate + A = pyruvate + AH2. Functionally, catalyzes the conversion of L-lactate to pyruvate. Is coupled to the respiratory chain. This Enterobacter sp. (strain 638) protein is L-lactate dehydrogenase.